A 60-amino-acid chain; its full sequence is Large ribosomal subunit protein bL32 (60 aa).

A disordered region spans residues 1–60 (MAVQQVKKSRSKRDMRRSHDSLTNPTLSTDKSTGELHLRHHVSPNGFYKGRKVVDTKSED). Positions 7–16 (KKSRSKRDMR) are enriched in basic residues. Positions 22 to 31 (LTNPTLSTDK) are enriched in polar residues.

Belongs to the bacterial ribosomal protein bL32 family.

The polypeptide is Large ribosomal subunit protein bL32 (Francisella tularensis subsp. holarctica (strain LVS)).